A 299-amino-acid chain; its full sequence is Porphobilinogen deaminase (299 aa).

An S-(dipyrrolylmethanemethyl)cysteine modification is found at C242.

It belongs to the HMBS family. As to quaternary structure, monomer. Dipyrromethane is required as a cofactor.

The catalysed reaction is 4 porphobilinogen + H2O = hydroxymethylbilane + 4 NH4(+). It functions in the pathway porphyrin-containing compound metabolism; protoporphyrin-IX biosynthesis; coproporphyrinogen-III from 5-aminolevulinate: step 2/4. Its function is as follows. Tetrapolymerization of the monopyrrole PBG into the hydroxymethylbilane pre-uroporphyrinogen in several discrete steps. The protein is Porphobilinogen deaminase (hemC) of Rickettsia prowazekii (strain Madrid E).